We begin with the raw amino-acid sequence, 258 residues long: Coiled-coil domain-containing protein 107 (258 aa).

The first 24 residues, 1 to 24, serve as a signal peptide directing secretion; the sequence is MASVVSLAGTLGLLLVSALPEVLG. Residues 25-35 show a composition bias toward basic and acidic residues; it reads DRRSPDRRAHP. The tract at residues 25–63 is disordered; the sequence is DRRSPDRRAHPGDAGQVGPAAAEPRRQSPPSKNQRERAR. The helical transmembrane segment at 66 to 86 threads the bilayer; sequence ALPLGALYTAAAVAFVLYKCL. Residues 106 to 134 are a coiled coil; the sequence is LQSEQHLAQLTQQLVQTEQHLNSLMAQLD. The tract at residues 203–222 is disordered; that stretch reads EPLNWNTGTRNLTPPREMQP.

Its subcellular location is the membrane. The sequence is that of Coiled-coil domain-containing protein 107 (CCDC107) from Bos taurus (Bovine).